A 989-amino-acid polypeptide reads, in one-letter code: Mediator of RNA polymerase II transcription subunit 24 (989 aa).

Short sequence motifs (LXXLL motif) lie at residues 343 to 347 (LTPLL), 359 to 363 (LSLLL), 447 to 451 (LDLLL), 556 to 560 (LVALL), 787 to 791 (LPRLL), and 857 to 861 (LMRLL).

It belongs to the Mediator complex subunit 24 family. As to quaternary structure, component of the Mediator complex.

Its subcellular location is the nucleus. Its function is as follows. Component of the Mediator complex, a coactivator involved in the regulated transcription of nearly all RNA polymerase II-dependent genes. Mediator functions as a bridge to convey information from gene-specific regulatory proteins to the basal RNA polymerase II transcription machinery. Mediator is recruited to promoters by direct interactions with regulatory proteins and serves as a scaffold for the assembly of a functional preinitiation complex with RNA polymerase II and the general transcription factors. Required for proliferation of enteric nervous system precursors. Required for the development of dopaminergic amacrine cells and rod photoreceptor cells in the retina. This chain is Mediator of RNA polymerase II transcription subunit 24 (med24), found in Danio rerio (Zebrafish).